Here is an 81-residue protein sequence, read N- to C-terminus: Sulfur carrier protein TusA (81 aa).

Cys-19 functions as the Cysteine persulfide intermediate in the catalytic mechanism.

Belongs to the sulfur carrier protein TusA family. As to quaternary structure, interacts with IscS.

Its subcellular location is the cytoplasm. Its pathway is tRNA modification. Its function is as follows. Sulfur carrier protein involved in sulfur trafficking in the cell. Part of a sulfur-relay system required for 2-thiolation during synthesis of 2-thiouridine of the modified wobble base 5-methylaminomethyl-2-thiouridine (mnm(5)s(2)U) in tRNA. Interacts with IscS and stimulates its cysteine desulfurase activity. Accepts an activated sulfur from IscS, which is then transferred to TusD, and thus determines the direction of sulfur flow from IscS to 2-thiouridine formation. Also appears to be involved in sulfur transfer for the biosynthesis of molybdopterin. In Salmonella choleraesuis (strain SC-B67), this protein is Sulfur carrier protein TusA.